A 311-amino-acid chain; its full sequence is uncharacterized protein (311 aa).

Residues 168-188 traverse the membrane as a helical segment; that stretch reads FNVMKGAILGLPIIGGIIVGV.

Its subcellular location is the cell membrane. This is an uncharacterized protein from Edwardsiella tarda.